The following is a 374-amino-acid chain: MYLANFELKDFRNFKELKTDFDPHVNIFIGPNAQGKTNLLEAIYFLALTRSHRTNSDKELIRFGSKFAGLQGRVHKSQLQVELKLRLTANGKKAWVNRLEQKKLSAYVGQMNAILFSPEDLALVKGAPSVRRRFMDLEFGQINSEYLYFSSQYRQVLQQRNNYLKQLSIKKANDQVFLDVLSDQLAGIAAEIISRRIKYIKKLNSYAKAAHSEISGQAEKLQIFYRPSVKEIIPEDNVETIYRKVITSYKKNRPNEIRKGTTLSGPHRDDLEFLINEKNAHDFASQGQQRTISLSVKLAEIQLVHELTQEYPILLLDDVMSELDHRRQSRLLNYIHGKTQTFITTTDLEGISWEIVKEPKVYHISAGTISAKES.

ATP is bound at residue 30-37; sequence GPNAQGKT.

The protein belongs to the RecF family.

It is found in the cytoplasm. In terms of biological role, the RecF protein is involved in DNA metabolism; it is required for DNA replication and normal SOS inducibility. RecF binds preferentially to single-stranded, linear DNA. It also seems to bind ATP. The sequence is that of DNA replication and repair protein RecF from Lactobacillus gasseri (strain ATCC 33323 / DSM 20243 / BCRC 14619 / CIP 102991 / JCM 1131 / KCTC 3163 / NCIMB 11718 / NCTC 13722 / AM63).